The sequence spans 752 residues: RNA-directed RNA polymerase catalytic subunit (752 aa).

2 consecutive short sequence motifs (nuclear localization signal) follow at residues 187–195 (IKKKLPAKN) and 203–216 (RIPM…TRVE). The segment at 249 to 256 (RGFVLVVE) is promoter-binding site. In terms of domain architecture, RdRp catalytic spans 286 to 482 (VAKMLSNCPP…GINMSKKKSY (197 aa)).

This sequence belongs to the influenza viruses polymerase PB1 family. Influenza RNA polymerase is composed of three subunits: PB1, PB2 and PA. Interacts (via N-terminus) with PA (via C-terminus). Interacts (via C-terminus) with PB2 (via N-terminus); this interaction is essential for transcription initiation. Post-translationally, phosphorylated by host PRKCA.

It localises to the host nucleus. Its subcellular location is the host cytoplasm. The catalysed reaction is RNA(n) + a ribonucleoside 5'-triphosphate = RNA(n+1) + diphosphate. Functionally, RNA-dependent RNA polymerase which is responsible for replication and transcription of virus RNA segments. The transcription of viral mRNAs occurs by a unique mechanism called cap-snatching. 5' methylated caps of cellular mRNAs are cleaved after 10-13 nucleotides by PA. In turn, these short capped RNAs are used as primers by PB1 for transcription of viral mRNAs. During virus replication, PB1 initiates RNA synthesis and copy vRNA into complementary RNA (cRNA) which in turn serves as a template for the production of more vRNAs. In Homo sapiens (Human), this protein is RNA-directed RNA polymerase catalytic subunit.